The chain runs to 322 residues: N-acetyl-gamma-glutamyl-phosphate reductase (322 aa).

The active site involves Cys-132.

Belongs to the NAGSA dehydrogenase family. Type 1 subfamily.

The protein resides in the cytoplasm. The catalysed reaction is N-acetyl-L-glutamate 5-semialdehyde + phosphate + NADP(+) = N-acetyl-L-glutamyl 5-phosphate + NADPH + H(+). It participates in amino-acid biosynthesis; L-arginine biosynthesis; N(2)-acetyl-L-ornithine from L-glutamate: step 3/4. Functionally, catalyzes the NADPH-dependent reduction of N-acetyl-5-glutamyl phosphate to yield N-acetyl-L-glutamate 5-semialdehyde. The protein is N-acetyl-gamma-glutamyl-phosphate reductase of Bacteroides fragilis (strain YCH46).